A 292-amino-acid polypeptide reads, in one-letter code: Acetyl-coenzyme A carboxylase carboxyl transferase subunit beta (292 aa).

The CoA carboxyltransferase N-terminal domain occupies 35–292; sequence VFSQCEQCNS…LKLHAKKVTS (258 aa). The Zn(2+) site is built by cysteine 39, cysteine 42, cysteine 58, and cysteine 61. A C4-type zinc finger spans residues 39 to 61; that stretch reads CEQCNSAIYNKDLEHNYEVCPYC.

Belongs to the AccD/PCCB family. In terms of assembly, acetyl-CoA carboxylase is a heterohexamer composed of biotin carboxyl carrier protein (AccB), biotin carboxylase (AccC) and two subunits each of ACCase subunit alpha (AccA) and ACCase subunit beta (AccD). Zn(2+) is required as a cofactor.

The protein localises to the cytoplasm. It catalyses the reaction N(6)-carboxybiotinyl-L-lysyl-[protein] + acetyl-CoA = N(6)-biotinyl-L-lysyl-[protein] + malonyl-CoA. It functions in the pathway lipid metabolism; malonyl-CoA biosynthesis; malonyl-CoA from acetyl-CoA: step 1/1. Functionally, component of the acetyl coenzyme A carboxylase (ACC) complex. Biotin carboxylase (BC) catalyzes the carboxylation of biotin on its carrier protein (BCCP) and then the CO(2) group is transferred by the transcarboxylase to acetyl-CoA to form malonyl-CoA. The polypeptide is Acetyl-coenzyme A carboxylase carboxyl transferase subunit beta (Acholeplasma laidlawii (strain PG-8A)).